Here is a 246-residue protein sequence, read N- to C-terminus: Adenosylcobinamide-GDP ribazoletransferase (246 aa).

7 helical membrane-spanning segments follow: residues 30–50 (VNWY…VHQA), 51–71 (GLVL…WVYV), 105–125 (VGAM…GAVA), 131–151 (GWGS…LLSI), 167–189 (ISSG…AGWY), 193–210 (LQVM…LWFS), and 226–246 (GAVI…SWWL).

Belongs to the CobS family. Mg(2+) serves as cofactor.

It localises to the cell membrane. It catalyses the reaction alpha-ribazole + adenosylcob(III)inamide-GDP = adenosylcob(III)alamin + GMP + H(+). The enzyme catalyses alpha-ribazole 5'-phosphate + adenosylcob(III)inamide-GDP = adenosylcob(III)alamin 5'-phosphate + GMP + H(+). It functions in the pathway cofactor biosynthesis; adenosylcobalamin biosynthesis; adenosylcobalamin from cob(II)yrinate a,c-diamide: step 7/7. Its function is as follows. Joins adenosylcobinamide-GDP and alpha-ribazole to generate adenosylcobalamin (Ado-cobalamin). Also synthesizes adenosylcobalamin 5'-phosphate from adenosylcobinamide-GDP and alpha-ribazole 5'-phosphate. This chain is Adenosylcobinamide-GDP ribazoletransferase, found in Brevibacillus brevis (strain 47 / JCM 6285 / NBRC 100599).